The following is a 184-amino-acid chain: Probable RNA 2'-phosphotransferase (184 aa).

Belongs to the KptA/TPT1 family.

In terms of biological role, removes the 2'-phosphate from RNA via an intermediate in which the phosphate is ADP-ribosylated by NAD followed by a presumed transesterification to release the RNA and generate ADP-ribose 1''-2''-cyclic phosphate (APPR&gt;P). May function as an ADP-ribosylase. The chain is Probable RNA 2'-phosphotransferase from Escherichia coli O9:H4 (strain HS).